The primary structure comprises 162 residues: Endoribonuclease YbeY (162 aa).

Residues His128, His132, and His138 each contribute to the Zn(2+) site.

The protein belongs to the endoribonuclease YbeY family. Requires Zn(2+) as cofactor.

The protein resides in the cytoplasm. Single strand-specific metallo-endoribonuclease involved in late-stage 70S ribosome quality control and in maturation of the 3' terminus of the 16S rRNA. The sequence is that of Endoribonuclease YbeY from Levilactobacillus brevis (strain ATCC 367 / BCRC 12310 / CIP 105137 / JCM 1170 / LMG 11437 / NCIMB 947 / NCTC 947) (Lactobacillus brevis).